We begin with the raw amino-acid sequence, 548 residues long: Fluconazole resistance protein 1 (548 aa).

Residues 30 to 94 (SAREDETRKP…WNGPSDPENP (65 aa)) form a disordered region. The span at 31 to 51 (AREDETRKPENTDKKECKPDY) shows a compositional bias: basic and acidic residues. Over residues 60–73 (SCSESSTDSDSSGS) the composition is skewed to low complexity. 12 helical membrane-spanning segments follow: residues 104-124 (LVVFQIMLLTCVTYMGSSIYT), 139-159 (VVATLNLSLYVLGYGLGPIIF), 179-199 (FFFMIFQVGCATVHNIGGLIV), 203-223 (ISGILCSPSLATGGGTVADII), 230-250 (LVLGMWSAGAVAAPVLAPLLG), 261-281 (FIFWLLMWLSAATFILLAFFF), 347-367 (IAVAYGCFYLFFEAFPIVFVG), 376-396 (VGLAYMGFCVGCVLAYGLFGI), 416-436 (FLIVAMCVCWCLPLSLFLFGW), 440-460 (VHWILPVISEVFFVLAVFNIF), 476-496 (ASVFAGNGFCRASFACAFPLF), and 511-531 (VAWGSSLVGFLTLGLAIIPFI).

Belongs to the major facilitator superfamily.

It is found in the membrane. Probable efflux transporter. Confers resistance to the azole derivative fluconazole (FCZ). This Saccharomyces cerevisiae (strain ATCC 204508 / S288c) (Baker's yeast) protein is Fluconazole resistance protein 1 (FLR1).